The chain runs to 89 residues: cAMP-regulated phosphoprotein 21 (89 aa).

Residues 1–89 (MSEPGDLSQT…GGESLQDQTL (89 aa)) are disordered. Serine 2 carries the post-translational modification N-acetylserine. Phosphoserine occurs at positions 33 and 56.

Interacts with CALM1. Phosphorylation at Ser-56 favors interaction with CALM1.

Its subcellular location is the cytoplasm. In terms of biological role, may act as a competitive inhibitor of calmodulin-dependent enzymes such as calcineurin in neurons. This Bos taurus (Bovine) protein is cAMP-regulated phosphoprotein 21 (ARPP21).